A 403-amino-acid polypeptide reads, in one-letter code: Synaptotagmin-7 (403 aa).

Topologically, residues 1–16 are vesicular; sequence MYRDPEAASPGAPTRD. Residues 17–37 traverse the membrane as a helical segment; sequence VLLVSAIITVSLSVTIVLCGL. The Cytoplasmic portion of the chain corresponds to 38 to 403; that stretch reads CHWCQRKLGK…PVAQWHQLKA (366 aa). Residue Ser52 is modified to Phosphoserine. Positions 53 to 103 are disordered; it reads LETVGTPDSGRGRGEKKAIKLPAGGKAVNTAPVPGQTPHDESDRRTETRSS. Residue Thr58 is modified to Phosphothreonine. Ser61 bears the Phosphoserine mark. Positions 90–100 are enriched in basic and acidic residues; that stretch reads PHDESDRRTET. 2 positions are modified to phosphoserine: Ser119 and Ser122. 2 C2 domains span residues 135–255 and 266–399; these read NLGR…TFWK and SRGE…AQWH. A Ca(2+)-binding site is contributed by Asp166. An asymmetric dimethylarginine mark is found at Gly169 and Ser171. Residues Asp172, Asp225, Asp227, Ser230, Asp233, Asp297, Asp303, Asp357, Asp359, Ser362, and Asp365 each coordinate Ca(2+).

Belongs to the synaptotagmin family. In terms of assembly, homodimer. Can also form heterodimers with SYT6, SYT9 and SYT10. Interacts with calmodulin (CALM1, CALM2 or CALM3). Interacts with CD63; required for localization to lysosomes. Interacts with APP. Requires Ca(2+) as cofactor. In terms of processing, palmitoylated at its vesicular N-terminus; palmitoylation is required for localization to lysosome and phagocytosis in macrophages. In terms of tissue distribution, widely expressed. Expressed in insulin-secreting cells. Present in glucagon-secreting cells (at protein level).

It localises to the cell membrane. Its subcellular location is the presynaptic cell membrane. The protein resides in the cytoplasmic vesicle. It is found in the secretory vesicle. The protein localises to the synaptic vesicle membrane. It localises to the lysosome membrane. Its subcellular location is the phagosome membrane. The protein resides in the peroxisome membrane. It is found in the secretory vesicle membrane. In terms of biological role, ca(2+) sensor involved in Ca(2+)-dependent exocytosis of secretory and synaptic vesicles through Ca(2+) and phospholipid binding to the C2 domain. Ca(2+) induces binding of the C2-domains to phospholipid membranes and to assembled SNARE-complexes; both actions contribute to triggering exocytosis. SYT7 binds Ca(2+) with high affinity and slow kinetics compared to other synaptotagmins. Involved in Ca(2+)-triggered lysosomal exocytosis, a major component of the plasma membrane repair. Ca(2+)-regulated delivery of lysosomal membranes to the cell surface is also involved in the phagocytic uptake of particles by macrophages. Ca(2+)-triggered lysosomal exocytosis also plays a role in bone remodeling by regulating secretory pathways in osteoclasts and osteoblasts. Involved in cholesterol transport from lysosome to peroxisome by promoting membrane contacts between lysosomes and peroxisomes: probably acts by promoting vesicle fusion by binding phosphatidylinositol-4,5-bisphosphate on peroxisomal membranes. Acts as a key mediator of synaptic facilitation, a process also named short-term synaptic potentiation: synaptic facilitation takes place at synapses with a low initial release probability and is caused by influx of Ca(2+) into the axon terminal after spike generation, increasing the release probability of neurotransmitters. Probably mediates synaptic facilitation by directly increasing the probability of release. May also contribute to synaptic facilitation by regulating synaptic vesicle replenishment, a process required to ensure that synaptic vesicles are ready for the arrival of the next action potential: SYT7 is required for synaptic vesicle replenishment by acting as a sensor for Ca(2+) and by forming a complex with calmodulin. Also acts as a regulator of Ca(2+)-dependent insulin and glucagon secretion in beta-cells. Triggers exocytosis by promoting fusion pore opening and fusion pore expansion in chromaffin cells. Also regulates the secretion of some non-synaptic secretory granules of specialized cells. This chain is Synaptotagmin-7, found in Mus musculus (Mouse).